A 761-amino-acid polypeptide reads, in one-letter code: Elongation factor G, mitochondrial (761 aa).

Residues 1-42 (MSVQKMMRVPRKMVGGRIPFFTCSKVFSGFSRRSFHESPLAR) constitute a mitochondrion transit peptide. In terms of domain architecture, tr-type G spans 68–349 (NKLRNIGISA…AIVDYLPNPS (282 aa)). Residues 77–84 (AHIDSGKT), 148–152 (DTPGH), and 202–205 (NKMD) contribute to the GTP site.

It belongs to the TRAFAC class translation factor GTPase superfamily. Classic translation factor GTPase family. EF-G/EF-2 subfamily. Post-translationally, the precursor is processed in two steps involving mitochondrial intermediate peptidase (MIP) and mitochondrial processing peptidase (MPP).

It is found in the mitochondrion. Its pathway is protein biosynthesis; polypeptide chain elongation. Mitochondrial GTPase that catalyzes the GTP-dependent ribosomal translocation step during translation elongation. During this step, the ribosome changes from the pre-translocational (PRE) to the post-translocational (POST) state as the newly formed A-site-bound peptidyl-tRNA and P-site-bound deacylated tRNA move to the P and E sites, respectively. Catalyzes the coordinated movement of the two tRNA molecules, the mRNA and conformational changes in the ribosome. The sequence is that of Elongation factor G, mitochondrial from Saccharomyces cerevisiae (strain YJM789) (Baker's yeast).